The chain runs to 381 residues: DNA double-strand break repair protein Mre11 (381 aa).

4 residues coordinate Mn(2+): D9, H11, D50, and D85. H86 (proton donor) is an active-site residue. Positions 156, 187, and 189 each coordinate Mn(2+).

This sequence belongs to the MRE11/RAD32 family. Homodimer. Forms a heterotetramer composed of two Mre11 subunits and two Rad50 subunits. The cofactor is Mn(2+).

With respect to regulation, nuclease activity is regulated by Rad50. Functionally, part of the Rad50/Mre11 complex, which is involved in the early steps of DNA double-strand break (DSB) repair. The complex may facilitate opening of the processed DNA ends to aid in the recruitment of HerA and NurA. Mre11 binds to DSB ends and has both double-stranded 3'-5' exonuclease activity and single-stranded endonuclease activity. The protein is DNA double-strand break repair protein Mre11 of Saccharolobus solfataricus (strain ATCC 35092 / DSM 1617 / JCM 11322 / P2) (Sulfolobus solfataricus).